Here is a 361-residue protein sequence, read N- to C-terminus: Phospho-N-acetylmuramoyl-pentapeptide-transferase (361 aa).

The next 10 helical transmembrane spans lie at 27 to 47 (GALFTAGLFVFWFGPWIISLL), 72 to 92 (TPTMGGLMILAGAVVAILLWA), 99 to 119 (VWVTLTVTLGFGAIGFYDDYL), 135 to 155 (LALEAVIAMAACVTIAVYSPA), 169 to 189 (ALLNLGWFYPLFGAFVIVGAG), 200 to 220 (GLAIVPVMIACGTFGFIAYLV), 240 to 260 (LAVVCGAVIGAGLGFLWFNAP), 264 to 284 (IFMGDTGSLALGGLLGSIAVA), 289 to 309 (IVLAIVGGLFVLEMMSVIIQV), and 338 to 358 (QVVIRFWIIAVILAMAGLATL).

The protein belongs to the glycosyltransferase 4 family. MraY subfamily. Mg(2+) serves as cofactor.

The protein resides in the cell inner membrane. It carries out the reaction UDP-N-acetyl-alpha-D-muramoyl-L-alanyl-gamma-D-glutamyl-meso-2,6-diaminopimeloyl-D-alanyl-D-alanine + di-trans,octa-cis-undecaprenyl phosphate = di-trans,octa-cis-undecaprenyl diphospho-N-acetyl-alpha-D-muramoyl-L-alanyl-D-glutamyl-meso-2,6-diaminopimeloyl-D-alanyl-D-alanine + UMP. It functions in the pathway cell wall biogenesis; peptidoglycan biosynthesis. Catalyzes the initial step of the lipid cycle reactions in the biosynthesis of the cell wall peptidoglycan: transfers peptidoglycan precursor phospho-MurNAc-pentapeptide from UDP-MurNAc-pentapeptide onto the lipid carrier undecaprenyl phosphate, yielding undecaprenyl-pyrophosphoryl-MurNAc-pentapeptide, known as lipid I. In Methylobacterium radiotolerans (strain ATCC 27329 / DSM 1819 / JCM 2831 / NBRC 15690 / NCIMB 10815 / 0-1), this protein is Phospho-N-acetylmuramoyl-pentapeptide-transferase.